We begin with the raw amino-acid sequence, 451 residues long: Adenylyltransferase and sulfurtransferase MOCS3-2 (451 aa).

The segment at 42-62 is disordered; the sequence is GEDSDEAEESSNDMPTPQTKL. The segment covering 43–52 has biased composition (acidic residues); sequence EDSDEAEESS. At T60 the chain carries Phosphothreonine. ATP contacts are provided by residues G99, D120, 127–131, K144, and 188–189; these read SNLHR and DN. C229 and C232 together coordinate Zn(2+). Catalysis depends on C246, which acts as the Glycyl thioester intermediate; for adenylyltransferase activity. 2 residues coordinate Zn(2+): C304 and C307. Residues 353–449 form the Rhodanese domain; the sequence is QSQPHLLLDV…WTGSVDATFP (97 aa). C408 serves as the catalytic Cysteine persulfide intermediate; for sulfurtransferase activity.

This sequence in the N-terminal section; belongs to the HesA/MoeB/ThiF family. UBA4 subfamily. Zn(2+) serves as cofactor.

Its subcellular location is the cytoplasm. It catalyses the reaction [molybdopterin-synthase sulfur-carrier protein]-C-terminal Gly-Gly + ATP + H(+) = [molybdopterin-synthase sulfur-carrier protein]-C-terminal Gly-Gly-AMP + diphosphate. The enzyme catalyses [molybdopterin-synthase sulfur-carrier protein]-C-terminal Gly-Gly-AMP + S-sulfanyl-L-cysteinyl-[cysteine desulfurase] + AH2 = [molybdopterin-synthase sulfur-carrier protein]-C-terminal-Gly-aminoethanethioate + L-cysteinyl-[cysteine desulfurase] + A + AMP + 2 H(+). Its pathway is tRNA modification; 5-methoxycarbonylmethyl-2-thiouridine-tRNA biosynthesis. The protein operates within cofactor biosynthesis; molybdopterin biosynthesis. Plays a central role in 2-thiolation of mcm(5)S(2)U at tRNA wobble positions of cytosolic tRNA(Lys), tRNA(Glu) and tRNA(Gln). Also essential during biosynthesis of the molybdenum cofactor. Acts by mediating the C-terminal thiocarboxylation of sulfur carriers URM1 and MOCS2A. Its N-terminus first activates URM1 and MOCS2A as acyl-adenylates (-COAMP), then the persulfide sulfur on the catalytic cysteine is transferred to URM1 and MOCS2A to form thiocarboxylation (-COSH) of their C-terminus. The reaction probably involves hydrogen sulfide that is generated from the persulfide intermediate and that acts as a nucleophile towards URM1 and MOCS2A. Subsequently, a transient disulfide bond is formed. Does not use thiosulfate as sulfur donor; NFS1 probably acting as a sulfur donor for thiocarboxylation reactions. This Drosophila pseudoobscura pseudoobscura (Fruit fly) protein is Adenylyltransferase and sulfurtransferase MOCS3-2.